We begin with the raw amino-acid sequence, 418 residues long: Putative FBD-associated F-box protein At5g56560 (418 aa).

One can recognise an F-box domain in the interval 4–60 (QTRLSDLPDELLLKILSALPMFKVTLATRLISRRWKGPWKLVPDVTFDDDDIPFKSF). One can recognise an FBD domain in the interval 340–390 (LWEEPAVVAKCLSEHLEIFEWRQYEGTEQERNVAGYILANATCLKMATFST).

The chain is Putative FBD-associated F-box protein At5g56560 from Arabidopsis thaliana (Mouse-ear cress).